The primary structure comprises 980 residues: Ras and Rab interactor 3 (980 aa).

The tract at residues 1 to 40 is disordered; sequence MRRAEAPSSAHPAGPIPDAGKGEGEEDEEKDGTRLGLSTT. Residues 63 to 158 form the SH2 domain; sequence WLQLGLGQAE…LLPFTLRLPQ (96 aa). Pro residues predominate over residues 247-260; sequence PLPTGSYPPRPTPA. Disordered regions lie at residues 247-496 and 509-560; these read PLPT…TGAS and QHLQ…LEFS. Residues 261 to 271 are compositionally biased toward low complexity; it reads TPDATSPTSKG. Over residues 274-308 the composition is skewed to pro residues; that stretch reads RRPPPPPPLPTVPPTGPARPLAPPVPPAGPLPNSP. 2 stretches are compositionally biased toward polar residues: residues 406 to 422 and 484 to 494; these read ISRT…TVSS and QEASSEKQATG. Residues 514 to 523 show a composition bias toward low complexity; that stretch reads QSSSCPQSSP. The interval 584 to 729 is interaction with RAB5B; that stretch reads FASVFHAFLS…TTTDLGVTTS (146 aa). The 144-residue stretch at 700-843 folds into the VPS9 domain; sequence HSRDGSLQQL…IKNYDKITVT (144 aa). The 98-residue stretch at 865-962 folds into the Ras-associating domain; the sequence is KARASRSSVQ…FHFVYRPQDS (98 aa).

The protein belongs to the RIN (Ras interaction/interference) family. In terms of assembly, interacts with CD2AP, RAB5B, RAB31 and BIN1.

It is found in the cytoplasm. Its subcellular location is the cytoplasmic vesicle. It localises to the early endosome. Functionally, ras effector protein that functions as a guanine nucleotide exchange (GEF) for RAB5B and RAB31, by exchanging bound GDP for free GTP. Required for normal RAB31 function. The polypeptide is Ras and Rab interactor 3 (Rin3) (Mus musculus (Mouse)).